Reading from the N-terminus, the 34-residue chain is Hemopexin (34 aa).

The interval 1 to 25 (RPLTQHKPHTPGDEHPHGAEPPGXD) is disordered.

This sequence belongs to the hemopexin family. In terms of tissue distribution, expressed by the liver and secreted in plasma.

Its subcellular location is the secreted. In terms of biological role, binds heme and transports it to the liver for breakdown and iron recovery, after which the free hemopexin returns to the circulation. The chain is Hemopexin (HPX) from Gallus gallus (Chicken).